We begin with the raw amino-acid sequence, 1514 residues long: Polycomb group protein ASXL1 (1514 aa).

One can recognise an HTH HARE-type domain in the interval 11 to 86 (RTWAEAARLV…RISLFTLKKD (76 aa)). Disordered stretches follow at residues 95–170 (ATVD…VMLP) and 183–249 (HVEP…RGEE). The span at 98–107 (DGDEPEDSAD) shows a compositional bias: acidic residues. The segment covering 111–145 (CGSNEASTVSGENDVSLDETSSNASCSTESQSRPL) has biased composition (polar residues). Residues 199 to 209 (SGSPSSSSSGS) are compositionally biased toward low complexity. Positions 243 to 246 (KRNR) are interaction with nucleosomal DNA forming a DNA clamp with BAP1. Positions 255-364 (PGSILVNTNL…FEDYYGQKLG (110 aa)) constitute a DEUBAD domain. Residues 284–288 (LLLLL) carry the LXXLL motif 1 motif. The segment at 300 to 655 (LLRLSGSALN…GGGSGAIDEG (356 aa)) is interaction with NCOA1. The NEF motif motif lies at 310–315 (NEFFTH). The tract at residues 336 to 346 (RLRQEMEKEKK) is interaction with nucleosomal DNA. Disordered regions lie at residues 378–543 (EEAK…EDRQ), 635–823 (TTAI…FDNM), 895–914 (SDPESRENIPCPEPQDEKEW), 926–952 (SVPQPESCISHWTPPPAAVGSTGSDSE), and 964–995 (ISEAPSPHSESTDTASDSEGHLSEDSSEVDAS). The Nuclear localization signal motif lies at 408 to 415 (FKKRSRPD). The span at 458 to 473 (VNSTPGPDVSSATSGQ) shows a compositional bias: polar residues. Phosphoserine occurs at positions 498 and 500. 2 stretches are compositionally biased toward basic and acidic residues: residues 514–525 (QETKDQKRKSFE) and 533–543 (PEKKPRLEDRQ). Residues 638 to 654 (IGGGGGPGGGGSGAIDE) are compositionally biased toward gly residues. Polar residues predominate over residues 678 to 692 (PSTSGESASDLQRTQ). Basic and acidic residues-rich tracts occupy residues 713-728 (ARREDSASLRKEESCL) and 779-793 (LLDDRTECESSREDQ). The LXXLL motif 2 motif lies at 808–812 (LGDLL). Polar residues predominate over residues 971–980 (HSESTDTASD). The tract at residues 1082-1087 (LVMHLL) is required for interaction with RARA. Disordered regions lie at residues 1095–1131 (KVLPPGHRSSRLESSQLPLREQSQDRGTLQGTGENNR), 1213–1234 (EQKEGHSLSQGSDPGAAPGQCL), and 1256–1338 (SEQT…VSAD). Residues 1119 to 1129 (DRGTLQGTGEN) are compositionally biased toward polar residues. 2 stretches are compositionally biased toward polar residues: residues 1256–1269 (SEQTDGTLSDQNNA) and 1313–1324 (SKNSVSGGVQTT). A PHD-type; atypical zinc finger spans residues 1476–1513 (SLQCACSLKAMIMCQGCGAFCHDDCIGPSKLCVLCLVV).

The protein belongs to the Asx family. As to quaternary structure, core component of the polycomb repressive deubiquitinase (PR-DUB) complex, at least composed of BAP1, one of ASXL1, ASXL2 or (probably) ASXL3, and one of MBD5 or MBD6. Distinct combinations of ASXL and MBD proteins may preferentially bind specific histone modification marks. The PR-DUB core associates with a number of accessory proteins, including FOXK1, FOXK2, KDM1B, HCFC1 and OGT; KDM1B specifically associates with ASXL2 PR-DUB complexes. Interacts (via DEUBAD domain) with BAP1 (via ULD domain); the interaction is direct and forms a ubiquitin binding cleft. The interaction with BAP1 is important for maintaining BAP1 stability. Together with BAP1, associates (via DEUBAD domain) with nucleosomes; interacts with nucleosomal DNA and stabilizes the orientation of the nucleosome to line up the PR-DUB complex active site with its H2AK118ub1 substrate. Interacts (via PHD domain) with MBD5 and MBD6 (via MBD domain); the interaction is probably direct and mediates association of MBD proteins with the PR-DUB core. Interacts with RARA, RXRA. Interacts with NCOA1. Interacts with PPARA and PPARG. Ubiquitinated by TRIP12, leading to its subsequent degradation following binding of N(6)-methyladenine methylated DNA (6mA).

Its subcellular location is the nucleus. In terms of biological role, probable Polycomb group (PcG) protein involved in transcriptional regulation mediated by ligand-bound nuclear hormone receptors, such as retinoic acid receptors (RARs) and peroxisome proliferator-activated receptor gamma (PPARG). Acts as a coactivator of RARA and RXRA through association with NCOA1. Acts as a corepressor for PPARG and suppresses its adipocyte differentiation-inducing activity. Non-catalytic component of the PR-DUB complex, a complex that specifically mediates deubiquitination of histone H2A monoubiquitinated at 'Lys-119' (H2AK119ub1). Acts as a sensor of N(6)-methyladenine methylation on DNA (6mA): recognizes and binds 6mA DNA, leading to its ubiquitination and degradation by TRIP12, thereby inactivating the PR-DUB complex and regulating Polycomb silencing. The PR-DUB complex is an epigenetic regulator of gene expression and acts as a transcriptional coactivator, affecting genes involved in development, cell communication, signaling, cell proliferation and cell viability. ASXL1, ASXL2 and ASXL3 function redundantly in the PR-DUB complex. The ASXL proteins are essential for chromatin recruitment and transcriptional activation of associated genes. ASXL1 and ASXL2 are important for BAP1 protein stability. Together with BAP1, negatively regulates epithelial-mesenchymal transition (EMT) of trophoblast stem cells during placental development by regulating genes involved in epithelial cell integrity, cell adhesion and cytoskeletal organization. This Mus musculus (Mouse) protein is Polycomb group protein ASXL1 (Asxl1).